A 117-amino-acid chain; its full sequence is Immunoglobulin heavy variable 4-38-2 (117 aa).

Residues M1–S19 form the signal peptide. Positions Q20–S44 are framework-1. The 98-residue stretch at Q20–R117 folds into the Ig-like domain. Cysteines 41 and 115 form a disulfide. Residues G45 to Y53 are complementarity-determining-1. The tract at residues W54–S70 is framework-2. Residues I71–T77 form a complementarity-determining-2 region. The interval Y78–C115 is framework-3. The segment at A116–R117 is complementarity-determining-3.

Immunoglobulins are composed of two identical heavy chains and two identical light chains; disulfide-linked.

The protein localises to the secreted. The protein resides in the cell membrane. V region of the variable domain of immunoglobulin heavy chains that participates in the antigen recognition. Immunoglobulins, also known as antibodies, are membrane-bound or secreted glycoproteins produced by B lymphocytes. In the recognition phase of humoral immunity, the membrane-bound immunoglobulins serve as receptors which, upon binding of a specific antigen, trigger the clonal expansion and differentiation of B lymphocytes into immunoglobulins-secreting plasma cells. Secreted immunoglobulins mediate the effector phase of humoral immunity, which results in the elimination of bound antigens. The antigen binding site is formed by the variable domain of one heavy chain, together with that of its associated light chain. Thus, each immunoglobulin has two antigen binding sites with remarkable affinity for a particular antigen. The variable domains are assembled by a process called V-(D)-J rearrangement and can then be subjected to somatic hypermutations which, after exposure to antigen and selection, allow affinity maturation for a particular antigen. This chain is Immunoglobulin heavy variable 4-38-2, found in Homo sapiens (Human).